The sequence spans 236 residues: 2-C-methyl-D-erythritol 4-phosphate cytidylyltransferase (236 aa).

This sequence belongs to the IspD/TarI cytidylyltransferase family. IspD subfamily. In terms of assembly, homodimer.

It carries out the reaction 2-C-methyl-D-erythritol 4-phosphate + CTP + H(+) = 4-CDP-2-C-methyl-D-erythritol + diphosphate. Its pathway is isoprenoid biosynthesis; isopentenyl diphosphate biosynthesis via DXP pathway; isopentenyl diphosphate from 1-deoxy-D-xylulose 5-phosphate: step 2/6. In terms of biological role, catalyzes the formation of 4-diphosphocytidyl-2-C-methyl-D-erythritol from CTP and 2-C-methyl-D-erythritol 4-phosphate (MEP). The chain is 2-C-methyl-D-erythritol 4-phosphate cytidylyltransferase from Escherichia coli O157:H7.